A 189-amino-acid chain; its full sequence is GTP cyclohydrolase 1 (189 aa).

3 residues coordinate Zn(2+): Cys-78, His-81, and Cys-150.

It belongs to the GTP cyclohydrolase I family. As to quaternary structure, homomer.

The enzyme catalyses GTP + H2O = 7,8-dihydroneopterin 3'-triphosphate + formate + H(+). Its pathway is cofactor biosynthesis; 7,8-dihydroneopterin triphosphate biosynthesis; 7,8-dihydroneopterin triphosphate from GTP: step 1/1. The chain is GTP cyclohydrolase 1 from Bacillus mycoides (strain KBAB4) (Bacillus weihenstephanensis).